Consider the following 392-residue polypeptide: Basic salivary proline-rich protein 1 (392 aa).

The first 16 residues, 1-16 (MLLILLSVALLALSSA), serve as a signal peptide directing secretion. Gln-17 bears the Pyrrolidone carboxylic acid mark. Polar residues predominate over residues 19-28 (LNEDVSQEES). Positions 19-392 (LNEDVSQEES…QGGRPSRPPQ (374 aa)) are disordered. Residues 34–47 (GNPQGPSPQGGNKP) show a composition bias toward low complexity. Phosphoserine; alternate is present on Ser-40. Residue Ser-40 is glycosylated (O-linked (Hex) serine; alternate). Positions 48-83 (QGPPPPPGKPQGPPPQGGNKPQGPPPPGKPQGPPPQ) are enriched in pro residues. Repeat copies occupy residues 53–72 (PPGK…QGPP), 73–92 (PPGK…SPRS), 93–112 (PPGK…QGPP), 114–133 (PPGK…QGPP), 134–153 (PPGK…SPRS), 154–173 (PPGK…QGPP), 175–194 (PPGK…QGPP), 195–214 (PPGK…SPRS), 215–234 (PPGK…QGPP), 236–255 (PPGK…QGPP), 256–275 (PPGK…SPQS), 276–295 (PPGK…QGPP), 297–316 (PPGK…QGPP), 317–336 (PPGK…QSAR), and 338–357 (PPGK…QGPP). The segment at 53–357 (PPGKPQGPPP…QEGNNPQGPP (305 aa)) is 15 X 20 AA approximate tandem repeats of P-P-G-K-P-Q-G-P-P-[PAQ]-Q-[GE]-[GD]-[NKS]-[KSQRN]-[PRQS]-[QS] [GPS]-[PQAR]-[PSR]. O-linked (HexNAc...) serine glycosylation occurs at Ser-87. Pro residues predominate over residues 91-144 (RSPPGKPQGPPPQGGNQPQGPPPPPGKPQGPPPQGGNKPQGPPPPGKPQGPPPQ). Position 92 is a phosphoserine (Ser-92). Ser-150 is modified (phosphoserine; alternate). A glycan (O-linked (Hex) serine; alternate) is linked at Ser-150. 4 stretches are compositionally biased toward pro residues: residues 152 to 205 (RSPP…PPPQ), 213 to 243 (RSPP…PQGP), 252 to 266 (QGPP…PPPQ), and 274 to 324 (QSPP…PQGP). Over residues 325-334 (PAQGGSKSQS) the composition is skewed to low complexity. A glycan (O-linked (HexNAc...) serine) is linked at Ser-330. A compositionally biased stretch (pro residues) spans 354–392 (QGPPPPAGGNPQQPQAPPAGQPQGPPRPPQGGRPSRPPQ).

In terms of processing, O-glycosylated. O-glycosylation on Ser-87 is prevalent in head and neck cancer patients. O-Glycosylation on Ser-330 has a 5 times prevalence in head and neck cancers. Proteolytically cleaved at the tripeptide Xaa-Pro-Gln, where Xaa in the P(3) position is mostly lysine. The endoprotease may be of microbial origin. Post-translationally, pyroglutamate formation occurs on terminal Gln residues of cleaved peptides. Besides on the N-terminal of mature PBR1, pyroglutamate formation found on at least Gln-58.

It localises to the secreted. The polypeptide is Basic salivary proline-rich protein 1 (PRB1) (Homo sapiens (Human)).